Here is a 530-residue protein sequence, read N- to C-terminus: MDTRFHCVYLLTSLDPQCAGEYYIGYTVDPIRRLRQHNGEIVSGAWRTKRRGRPWELLCCVSGFGEDRIALKFEWCWQHPTKSTRLKTQMTQLRGVHRLPYAVGVLHLLLRADLFARLQLTLHIFEPEHVGRVVAELQGRVPSIPPLVATSLLRIEEITKERFMSLYLDGVSGGDGTAGDGCVYFVTAPLSSQPEADAPSRRVRSCRYLSEEDIFRQHARVKELLEANQCPCALCSLPLRSPYFVRCSRTPFCTLRAHLACLAMWFTYETMQKRDATMGQSTRNERSGEYSNKIKDDSNDGTMDAHASGRQLHSLSVNNADFSSSRDAGSILDSSGHISAFEESRCASSPSLTLLPSQPCPCPLCDEPLQWGALVHDLKRRAVLEKRWMERQRREKIEAALAERLQRLQNSSLTERKSRRKAKPALGQKRNRGEYCGDTVGDGGKEAITNWRARVMDGCDSWNDTNDFSHSVSLPPSGDEGYACDSSRRGVGGSKHTTRMTDEGKNDSITDICDCVLQLTEFNLDEWLDA.

Residues 4–89 (RFHCVYLLTS…PTKSTRLKTQ (86 aa)) form the GIY-YIG domain. The SLX1-type zinc finger occupies 232 to 365 (CALCSLPLRS…PSQPCPCPLC (134 aa)). Disordered stretches follow at residues 276–306 (ATMG…MDAH), 410–438 (NSSL…YCGD), and 474–502 (LPPS…RMTD). Positions 283–298 (RNERSGEYSNKIKDDS) are enriched in basic and acidic residues.

It belongs to the SLX1 family. As to quaternary structure, forms a heterodimer with a member of the SLX4 family. Requires a divalent metal cation as cofactor.

It is found in the nucleus. In terms of biological role, catalytic subunit of a heterodimeric structure-specific endonuclease that resolves DNA secondary structures generated during DNA repair and recombination. Has endonuclease activity towards branched DNA substrates, introducing single-strand cuts in duplex DNA close to junctions with ss-DNA. The chain is Structure-specific endonuclease subunit SLX1 homolog 2 from Trypanosoma cruzi (strain CL Brener).